The chain runs to 129 residues: Protein RALF-like 34 (129 aa).

An N-terminal signal peptide occupies residues 1-23; that stretch reads MAASSLNLLLILSLLTFISLQRS. A propeptide spans 24 to 76 (removed in mature form); that stretch reads ESLSDNPSLTLLPDGFDWPISHSDEFDIIDGEESFEVTEEDDGVTDRRSLYWR. Cystine bridges form between Cys-94–Cys-107 and Cys-121–Cys-127.

It belongs to the plant rapid alkalinization factor (RALF) family. Post-translationally, proteolytically cleaved, probably by S1P, a subtilisin-like serine protease (subtilase). As to expression, expressed in roots, stems and leaves.

Its subcellular location is the secreted. Cell signaling peptide that may regulate plant stress, growth, and development. Mediates a rapid alkalinization of extracellular space by mediating a transient increase in the cytoplasmic Ca(2+) concentration leading to a calcium-dependent signaling events through a cell surface receptor and a concomitant activation of some intracellular mitogen-activated protein kinases. The protein is Protein RALF-like 34 (RALFL34) of Arabidopsis thaliana (Mouse-ear cress).